The following is a 358-amino-acid chain: Na(+)/H(+) exchange regulatory cofactor NHE-RF1 (358 aa).

An N-acetylserine modification is found at S2. 2 positions are modified to phosphoserine: S2 and S46. Residues 14 to 94 form the PDZ 1 domain; the sequence is LCCLEKGPNG…AVRLLVVDPE (81 aa). Low complexity predominate over residues 114 to 134; it reads QETPGQAEPAAAAEAQGAGNE. 2 disordered regions span residues 114 to 192 and 269 to 358; these read QETP…EASG and SREA…FSNL. Positions 135–149 are enriched in basic and acidic residues; sequence NEPREADKSHPEQRK. Positions 154–234 constitute a PDZ 2 domain; sequence LCTMKKGPSG…ETKLLVVDRE (81 aa). A phosphoserine mark is found at S162, S269, S280, S290, and S291. A compositionally biased stretch (polar residues) spans 287 to 306; sequence RSASSDTSEELNSQDSPPKQ. T293 bears the Phosphothreonine mark. Residues S294, S299, and S302 each carry the phosphoserine modification. The span at 307–319 shows a compositional bias: low complexity; that stretch reads DSTAPSSTSSSDP. Over residues 348-358 the composition is skewed to basic and acidic residues; sequence WSKKNELFSNL.

Homodimer, and heterodimer with NHERF2. Binds the N-termini of EZR, RDX and MSN. Binds the C-termini of PDGFRA, PDGFRB, ADRB2, NOS2 and CFTR. Binds ARHGAP17, EPI64, RACK1, OPRK1, GNAQ, CTNNB1 and PLCB3. Binds PDZK1. Interacts with CLCN3. Binds the C-terminus of PAG1. In resting T-cells, part of a PAG1-NHERF1-MSN complex which is disrupted upon TCR activation. Forms a complex with CFTR and SLC4A7. Forms a complex with SLC4A7 and ATP6V1B1. Interacts with TRPC4 (via the PDZ-binding domain). Directly interacts with HTR4. Interacts (via the PDZ 1 domain) with PODXL (via the C-terminal PDZ-binding motif DTHL); interaction is not detected in glomerular epithelium cells. Interacts (via the PDZ 1 domain) with PODXL (via the C-terminal PDZ-binding motif DTHL); the interaction take place early in the secretory pathway and is necessary for its apical membrane sorting. Interacts with SLC26A3. Interacts with MCC. Interacts with SLC34A1. Interacts (via the PDZ domains) with SLC26A6 isoform 4 and isoform 5. Interacts (via PDZ domains) with ACE2 (via PDZ-binding motif); the interaction may enhance ACE2 membrane residence. In terms of processing, phosphorylated on serine residues.

The protein localises to the cytoplasm. It is found in the apical cell membrane. Its subcellular location is the endomembrane system. It localises to the cell projection. The protein resides in the filopodium. The protein localises to the ruffle. It is found in the microvillus. In terms of biological role, scaffold protein that connects plasma membrane proteins with members of the ezrin/moesin/radixin family and thereby helps to link them to the actin cytoskeleton and to regulate their surface expression. Necessary for recycling of internalized ADRB2. Was first known to play a role in the regulation of the activity and subcellular location of SLC9A3. Necessary for cAMP-mediated phosphorylation and inhibition of SLC9A3. Involved in sperm capacitation. May participate in the regulation of the chloride and bicarbonate homeostasis in spermatozoa. May enhance Wnt signaling. May participate in HTR4 targeting to microvilli. Involved in the regulation of phosphate reabsorption in the renal proximal tubules. This Macaca fascicularis (Crab-eating macaque) protein is Na(+)/H(+) exchange regulatory cofactor NHE-RF1 (NHERF1).